The primary structure comprises 73 residues: Gastricsin (73 aa).

The propeptide at 1–43 (SVIKVPLKKLKSIRQAMKEKGLLEEFLKTHKYDPAQRYRIGDI) is activation peptide. A Peptidase A1 domain is found at 57–73 (YFGEISIGTPPQNFLVL).

Belongs to the peptidase A1 family.

It is found in the secreted. The catalysed reaction is More restricted specificity than pepsin A, but shows preferential cleavage at Tyr-|-Xaa bonds. High activity on hemoglobin.. Hydrolyzes a variety of proteins. The protein is Gastricsin (PGC) of Sus scrofa (Pig).